The chain runs to 385 residues: 1-deoxy-D-xylulose 5-phosphate reductoisomerase (385 aa).

6 residues coordinate NADPH: T11, G12, S13, I14, N39, and N123. K124 lines the 1-deoxy-D-xylulose 5-phosphate pocket. Residue E125 participates in NADPH binding. D149 provides a ligand contact to Mn(2+). The 1-deoxy-D-xylulose 5-phosphate site is built by S150, E151, S174, and H197. E151 contacts Mn(2+). G203 is a binding site for NADPH. S210, N215, K216, and E219 together coordinate 1-deoxy-D-xylulose 5-phosphate. E219 provides a ligand contact to Mn(2+).

It belongs to the DXR family. Mg(2+) is required as a cofactor. Requires Mn(2+) as cofactor.

The enzyme catalyses 2-C-methyl-D-erythritol 4-phosphate + NADP(+) = 1-deoxy-D-xylulose 5-phosphate + NADPH + H(+). Its pathway is isoprenoid biosynthesis; isopentenyl diphosphate biosynthesis via DXP pathway; isopentenyl diphosphate from 1-deoxy-D-xylulose 5-phosphate: step 1/6. Catalyzes the NADPH-dependent rearrangement and reduction of 1-deoxy-D-xylulose-5-phosphate (DXP) to 2-C-methyl-D-erythritol 4-phosphate (MEP). This is 1-deoxy-D-xylulose 5-phosphate reductoisomerase from Porphyromonas gingivalis (strain ATCC 33277 / DSM 20709 / CIP 103683 / JCM 12257 / NCTC 11834 / 2561).